The sequence spans 490 residues: Bifunctional protein GlmU (490 aa).

The interval 1 to 241 (MSSPGDTAVL…SALVAGVNNR (241 aa)) is pyrophosphorylase. UDP-N-acetyl-alpha-D-glucosamine is bound by residues 12–15 (LAAG), lysine 26, glutamine 83, 88–89 (GT), 112–114 (SGD), glycine 151, glutamate 166, asparagine 181, and asparagine 239. Mg(2+) is bound at residue aspartate 114. Position 239 (asparagine 239) interacts with Mg(2+). Residues 242 to 262 (VQLAQLGAELNRRIVAAHQLA) form a linker region. Residues 263–490 (GVTVVDPATT…AGGRPAGEAE (228 aa)) are N-acetyltransferase. Arginine 344 and lysine 362 together coordinate UDP-N-acetyl-alpha-D-glucosamine. The active-site Proton acceptor is histidine 374. Tyrosine 377 and asparagine 388 together coordinate UDP-N-acetyl-alpha-D-glucosamine. Residues alanine 391, 397–398 (NY), serine 416, and alanine 434 each bind acetyl-CoA. Residues 462–490 (RRKRPGSAAARAAEAAEKAAGGRPAGEAE) form a disordered region. The segment covering 467–490 (GSAAARAAEAAEKAAGGRPAGEAE) has biased composition (low complexity).

In the N-terminal section; belongs to the N-acetylglucosamine-1-phosphate uridyltransferase family. This sequence in the C-terminal section; belongs to the transferase hexapeptide repeat family. In terms of assembly, homotrimer. It depends on Mg(2+) as a cofactor.

Its subcellular location is the cytoplasm. It catalyses the reaction alpha-D-glucosamine 1-phosphate + acetyl-CoA = N-acetyl-alpha-D-glucosamine 1-phosphate + CoA + H(+). It carries out the reaction N-acetyl-alpha-D-glucosamine 1-phosphate + UTP + H(+) = UDP-N-acetyl-alpha-D-glucosamine + diphosphate. Its pathway is nucleotide-sugar biosynthesis; UDP-N-acetyl-alpha-D-glucosamine biosynthesis; N-acetyl-alpha-D-glucosamine 1-phosphate from alpha-D-glucosamine 6-phosphate (route II): step 2/2. The protein operates within nucleotide-sugar biosynthesis; UDP-N-acetyl-alpha-D-glucosamine biosynthesis; UDP-N-acetyl-alpha-D-glucosamine from N-acetyl-alpha-D-glucosamine 1-phosphate: step 1/1. It participates in bacterial outer membrane biogenesis; LPS lipid A biosynthesis. Functionally, catalyzes the last two sequential reactions in the de novo biosynthetic pathway for UDP-N-acetylglucosamine (UDP-GlcNAc). The C-terminal domain catalyzes the transfer of acetyl group from acetyl coenzyme A to glucosamine-1-phosphate (GlcN-1-P) to produce N-acetylglucosamine-1-phosphate (GlcNAc-1-P), which is converted into UDP-GlcNAc by the transfer of uridine 5-monophosphate (from uridine 5-triphosphate), a reaction catalyzed by the N-terminal domain. The sequence is that of Bifunctional protein GlmU from Mycobacterium avium (strain 104).